Consider the following 420-residue polypeptide: Glucose-1-phosphate adenylyltransferase (420 aa).

Residues Tyr-107, Gly-173, 188-189 (EK), and Ser-206 each bind alpha-D-glucose 1-phosphate.

This sequence belongs to the bacterial/plant glucose-1-phosphate adenylyltransferase family. In terms of assembly, homotetramer.

The catalysed reaction is alpha-D-glucose 1-phosphate + ATP + H(+) = ADP-alpha-D-glucose + diphosphate. The protein operates within glycan biosynthesis; glycogen biosynthesis. In terms of biological role, involved in the biosynthesis of ADP-glucose, a building block required for the elongation reactions to produce glycogen. Catalyzes the reaction between ATP and alpha-D-glucose 1-phosphate (G1P) to produce pyrophosphate and ADP-Glc. This is Glucose-1-phosphate adenylyltransferase from Shewanella frigidimarina (strain NCIMB 400).